We begin with the raw amino-acid sequence, 143 residues long: Boletus edulis lectin (143 aa).

Residues Ala30, 49 to 50, and 72 to 73 each bind beta-D-Gal-(1-&gt;3)-alpha-D-GalNAc; these read SG and HN. N-acetyl-alpha-D-galactosamine-binding positions include 49 to 50 and 72 to 73; these read SG and HN. Residues 79–82, Arg103, and Tyr114 contribute to the N,N'-diacetylchitobiose site; that span reads DVVT. N-acetyl-alpha-D-glucosamine-binding positions include 79-82, Arg103, and Tyr114; that span reads DVVT.

It belongs to the fungal fruit body lectin family. In terms of assembly, homotetramer.

Functionally, lectin that recognizes O-linked galactose-beta-1,3-N-acetylgalactosamine, a disaccharide (Thomsen-Friedenreich antigen or T-disaccharide), present on cell surface glycoproteins. Can also bind chitin, N,N'-diacetylchitobiose, N-acetylgalactosamine and N-acetylglucosamine. Inhibits proliferation of colon, breast and liver cancer cell lines (in vitro). The protein is Boletus edulis lectin of Boletus edulis (King bolete).